The chain runs to 847 residues: DNA ligase (847 aa).

A compositionally biased stretch (low complexity) spans 1-22 (MSDTTTGSDAADAAVPATTPAD). Residues 1-23 (MSDTTTGSDAADAAVPATTPADL) are disordered. NAD(+) is bound by residues 54–58 (DAEYD), 104–105 (SL), and E135. K137 acts as the N6-AMP-lysine intermediate in catalysis. NAD(+) is bound by residues R158, E195, K326, and K350. Residues C444, C447, C463, and C469 each coordinate Zn(2+). The BRCT domain occupies 686-775 (AAGGVLAGLA…PDAIALPEAD (90 aa)). The segment at 770-847 (ALPEADPVPD…AEPDGPAETP (78 aa)) is disordered. Composition is skewed to low complexity over residues 786 to 807 (DGGS…ATAE) and 819 to 833 (PAAA…VEAG).

Belongs to the NAD-dependent DNA ligase family. LigA subfamily. Mg(2+) is required as a cofactor. Mn(2+) serves as cofactor.

The enzyme catalyses NAD(+) + (deoxyribonucleotide)n-3'-hydroxyl + 5'-phospho-(deoxyribonucleotide)m = (deoxyribonucleotide)n+m + AMP + beta-nicotinamide D-nucleotide.. In terms of biological role, DNA ligase that catalyzes the formation of phosphodiester linkages between 5'-phosphoryl and 3'-hydroxyl groups in double-stranded DNA using NAD as a coenzyme and as the energy source for the reaction. It is essential for DNA replication and repair of damaged DNA. This Clavibacter sepedonicus (Clavibacter michiganensis subsp. sepedonicus) protein is DNA ligase.